We begin with the raw amino-acid sequence, 210 residues long: RNA binding protein, mRNA processing factor 2 (210 aa).

Over residues 1-10 (MSNLKPDVEH) the composition is skewed to basic and acidic residues. The tract at residues 1–25 (MSNLKPDVEHCTGAGTGTGTGPSGP) is disordered. Position 2 is an N-acetylserine (S2). The RRM domain occupies 31–108 (RTLFVSGLPV…QTLRLEFAKA (78 aa)). The important for homodimerization stretch occupies residues 41 to 51 (DIKPRELYLLF).

As to quaternary structure, homodimer. Interacts with EEF2.

It is found in the cytoplasm. Its subcellular location is the nucleus. The protein localises to the stress granule. Its function is as follows. RNA-binding protein involved in the regulation of smooth muscle cell differentiation and proliferation in the gastrointestinal system. Binds NOG mRNA, the major inhibitor of the bone morphogenetic protein (BMP) pathway. Mediates an increase of NOG mRNA levels, thereby contributing to the negative regulation of BMP signaling pathway and promoting reversible dedifferentiation and proliferation of smooth muscle cells. Acts as a pre-mRNA alternative splicing regulator. Mediates ACTN1 and FLNB alternative splicing. Likely binds to mRNA tandem CAC trinucleotide or CA dinucleotide motifs. The protein is RNA binding protein, mRNA processing factor 2 (Rbpms2) of Rattus norvegicus (Rat).